Reading from the N-terminus, the 456-residue chain is Frizzled/smoothened-like sans CRD protein F (456 aa).

The signal sequence occupies residues 1–30 (MIFNNLKNQNKIINFLIIFYFLSFLKQIES). Residues 31-92 (QSINITSSSS…PFFTINEWNK (62 aa)) lie on the Extracellular side of the membrane. Asn-34, Asn-52, and Asn-70 each carry an N-linked (GlcNAc...) asparagine glycan. Residues 93-113 (FLNMSLVMGTISFFSGLFLLV) form a helical membrane-spanning segment. The Cytoplasmic segment spans residues 114-127 (TYSPIVNKTHNRHT). A helical transmembrane segment spans residues 128–148 (IGVMCMSFGVCLAMCSDMWNF). At 149-174 (GSNFTEKSICPSPGQYLSTSNARCLS) the chain is on the extracellular side. A glycan (N-linked (GlcNAc...) asparagine) is linked at Asn-151. Residues 175-195 (SGIFLQFGGVFGFLNWTLLSF) form a helical membrane-spanning segment. The Cytoplasmic portion of the chain corresponds to 196 to 211 (DLFMNIKGIITKNYDK). Residues 212 to 232 (YYVSGTFIIAIIFTFVPIVND) traverse the membrane as a helical segment. Over 233–252 (QYSMSYIGLGCWLGSAMYQL) the chain is Extracellular. The helical transmembrane segment at 253-273 (IFFWILLSICLIVSSVFIILI) threads the bilayer. Topologically, residues 274-297 (LKEVYIIIKLSKQKTSLKGNIRPL) are cytoplasmic. Residues 298 to 318 (ICISITGFAFFYMFFYYISIV) traverse the membrane as a helical segment. Residues 319 to 354 (VEGDYYERVLNEYTDCLMDPTKDISECKSPRMSVAS) lie on the Extracellular side of the membrane. The helical transmembrane segment at 355 to 375 (EFVFLLCLRLLGIGAFIFYGI) threads the bilayer. Residues 376 to 456 (NNKVKKIWLN…ESSLNSVDEI (81 aa)) lie on the Cytoplasmic side of the membrane. The interval 403–422 (ADNDKSNSNGSKVLYRTNNT) is disordered.

This sequence belongs to the G-protein coupled receptor Fz/Smo family.

It localises to the membrane. The protein is Frizzled/smoothened-like sans CRD protein F (fscF) of Dictyostelium discoideum (Social amoeba).